The primary structure comprises 383 residues: Meiotically up-regulated gene 93 protein (383 aa).

The stretch at 75-108 (KKVIWRRGLAYLRLGHPHLANRDWEHSLELDPNN) is one TPR repeat.

The protein resides in the cytoplasm. Its subcellular location is the nucleus. Its function is as follows. Has a role in meiosis. The chain is Meiotically up-regulated gene 93 protein (mug93) from Schizosaccharomyces pombe (strain 972 / ATCC 24843) (Fission yeast).